The primary structure comprises 269 residues: Shikimate dehydrogenase (NADP(+)) (269 aa).

Shikimate contacts are provided by residues 22–24 (TLS) and Thr-68. The active-site Proton acceptor is Lys-72. Asn-93 and Asp-104 together coordinate shikimate. Residues 128–132 (GAGGA), 152–157 (NRTKSR), and Phe-210 contribute to the NADP(+) site. Residue Tyr-212 participates in shikimate binding. Gly-233 provides a ligand contact to NADP(+).

It belongs to the shikimate dehydrogenase family. As to quaternary structure, homodimer.

The enzyme catalyses shikimate + NADP(+) = 3-dehydroshikimate + NADPH + H(+). Its pathway is metabolic intermediate biosynthesis; chorismate biosynthesis; chorismate from D-erythrose 4-phosphate and phosphoenolpyruvate: step 4/7. Involved in the biosynthesis of the chorismate, which leads to the biosynthesis of aromatic amino acids. Catalyzes the reversible NADPH linked reduction of 3-dehydroshikimate (DHSA) to yield shikimate (SA). This is Shikimate dehydrogenase (NADP(+)) from Saccharolobus solfataricus (strain ATCC 35092 / DSM 1617 / JCM 11322 / P2) (Sulfolobus solfataricus).